The following is a 165-amino-acid chain: UPF0303 protein Bphy_1660 (165 aa).

Belongs to the UPF0303 family.

The protein is UPF0303 protein Bphy_1660 of Paraburkholderia phymatum (strain DSM 17167 / CIP 108236 / LMG 21445 / STM815) (Burkholderia phymatum).